The chain runs to 203 residues: Undecaprenyl phosphate transporter A (203 aa).

5 consecutive transmembrane segments (helical) span residues 16 to 36 (AIFI…EIIL), 48 to 68 (LSIL…LLIL), 108 to 128 (YGVW…LITI), 137 to 157 (VVTF…GLIL), and 173 to 193 (LHTY…YFAI).

Belongs to the DedA family.

It localises to the cell membrane. Functionally, flippase that catalyzes the transport of undecaprenyl phosphate (UndP) across the cytoplasmic membrane, from the external side to the cytoplasmic side. Is involved in UndP recycling during peptidoglycan synthesis. In Staphylococcus aureus (strain NCTC 8325 / PS 47), this protein is Undecaprenyl phosphate transporter A.